A 144-amino-acid chain; its full sequence is Large ribosomal subunit protein uL16 (144 aa).

A compositionally biased stretch (basic residues) spans Met-1–Arg-14. The tract at residues Met-1–Asn-22 is disordered.

Belongs to the universal ribosomal protein uL16 family. In terms of assembly, part of the 50S ribosomal subunit.

In terms of biological role, binds 23S rRNA and is also seen to make contacts with the A and possibly P site tRNAs. This Syntrophomonas wolfei subsp. wolfei (strain DSM 2245B / Goettingen) protein is Large ribosomal subunit protein uL16.